The sequence spans 179 residues: Tegument protein UL55 homolog (179 aa).

It belongs to the alphaherpesvirinae HHV-1 UL55 family.

The protein localises to the virion tegument. It localises to the host nucleus matrix. This chain is Tegument protein UL55 homolog, found in Homo sapiens (Human).